Reading from the N-terminus, the 84-residue chain is Sec-independent protein translocase protein TatA (84 aa).

Residues 1-21 (MPNLGVPELLIIALVIFLLFG) traverse the membrane as a helical segment. Residues 42–57 (EMDEMKTDGDKKELAE) show a composition bias toward basic and acidic residues. The segment at 42–84 (EMDEMKTDGDKKELAEKQAPTAEQQQAQDLAQPKSEQPNEHNA) is disordered. Positions 62-77 (TAEQQQAQDLAQPKSE) are enriched in polar residues.

The protein belongs to the TatA/E family. In terms of assembly, the Tat system comprises two distinct complexes: a TatABC complex, containing multiple copies of TatA, TatB and TatC subunits, and a separate TatA complex, containing only TatA subunits. Substrates initially bind to the TatABC complex, which probably triggers association of the separate TatA complex to form the active translocon.

It localises to the cell membrane. In terms of biological role, part of the twin-arginine translocation (Tat) system that transports large folded proteins containing a characteristic twin-arginine motif in their signal peptide across membranes. TatA could form the protein-conducting channel of the Tat system. The sequence is that of Sec-independent protein translocase protein TatA from Corynebacterium jeikeium (strain K411).